A 255-amino-acid polypeptide reads, in one-letter code: Hydroxyacylglutathione hydrolase (255 aa).

Zn(2+) contacts are provided by His56, His58, Asp60, His61, His114, Asp133, and His171.

It belongs to the metallo-beta-lactamase superfamily. Glyoxalase II family. As to quaternary structure, monomer. The cofactor is Zn(2+).

It catalyses the reaction an S-(2-hydroxyacyl)glutathione + H2O = a 2-hydroxy carboxylate + glutathione + H(+). Its pathway is secondary metabolite metabolism; methylglyoxal degradation; (R)-lactate from methylglyoxal: step 2/2. In terms of biological role, thiolesterase that catalyzes the hydrolysis of S-D-lactoyl-glutathione to form glutathione and D-lactic acid. This is Hydroxyacylglutathione hydrolase from Rhodopseudomonas palustris (strain BisB18).